We begin with the raw amino-acid sequence, 254 residues long: Cytokine-inducible SH2-containing protein (254 aa).

Residues 82–188 (WYWGSITASE…ATTPALPTPK (107 aa)) enclose the SH2 domain. The disordered stretch occupies residues 171–195 (TRSDSPDLATTPALPTPKEDAPGDP). The region spanning 205 to 253 (KLVQPFVRRSSTRSLQHLCRLVINRLVVDVDCLPLPRRMADYLRQYPFQ) is the SOCS box domain.

In terms of assembly, stably associated with the tyrosine-phosphorylated IL3 receptor beta chain and tyrosine-phosphorylated EPO receptor (EPOR).

The protein operates within protein modification; protein ubiquitination. In terms of biological role, SOCS family proteins form part of a classical negative feedback system that regulates cytokine signal transduction. CIS is involved in the negative regulation of cytokines that signal through the JAK-STAT5 pathway such as erythropoietin, prolactin and interleukin 3 (IL3) receptor. Inhibits STAT5 trans-activation by suppressing its tyrosine phosphorylation. May be a substrate recognition component of a SCF-like ECS (Elongin BC-CUL2/5-SOCS-box protein) E3 ubiquitin-protein ligase complex which mediates the ubiquitination and subsequent proteasomal degradation of target proteins. The chain is Cytokine-inducible SH2-containing protein (CISH) from Bos taurus (Bovine).